Here is a 108-residue protein sequence, read N- to C-terminus: Nascent polypeptide-associated complex protein (108 aa).

The NAC-A/B domain occupies 1-68 (MNPREIRRMM…LREVKKEVEQ (68 aa)).

This sequence belongs to the NAC-alpha family. Homodimer. Interacts with the ribosome. Binds ribosomal RNA.

In terms of biological role, contacts the emerging nascent chain on the ribosome. This is Nascent polypeptide-associated complex protein from Picrophilus torridus (strain ATCC 700027 / DSM 9790 / JCM 10055 / NBRC 100828 / KAW 2/3).